The chain runs to 306 residues: Large ribosomal subunit protein uL2m (306 aa).

A mitochondrion-targeting transit peptide spans 1-60 (MALCALTSALRSLSLASAAITARVPTLLPAAQIQSNVLLQLPPALVSPSYRPVHMSADRS).

It belongs to the universal ribosomal protein uL2 family. As to quaternary structure, component of the mitochondrial ribosome large subunit (39S) which comprises a 16S rRNA and about 50 distinct proteins.

Its subcellular location is the mitochondrion. The sequence is that of Large ribosomal subunit protein uL2m (Mrpl2) from Mus musculus (Mouse).